We begin with the raw amino-acid sequence, 147 residues long: Small ribosomal subunit protein uS12 (147 aa).

The protein belongs to the universal ribosomal protein uS12 family. As to quaternary structure, part of the 30S ribosomal subunit.

Its function is as follows. With S4 and S5 plays an important role in translational accuracy. Located at the interface of the 30S and 50S subunits. The sequence is that of Small ribosomal subunit protein uS12 from Saccharolobus solfataricus (strain ATCC 35092 / DSM 1617 / JCM 11322 / P2) (Sulfolobus solfataricus).